The primary structure comprises 633 residues: tRNA uridine 5-carboxymethylaminomethyl modification enzyme MnmG (633 aa).

Residues 15–20 (GAGHAG), Val-127, and Ser-182 contribute to the FAD site. 276–290 (GPRYCPSIEDKIVRF) is a binding site for NAD(+). An FAD-binding site is contributed by Gln-373.

Belongs to the MnmG family. In terms of assembly, homodimer. Heterotetramer of two MnmE and two MnmG subunits. It depends on FAD as a cofactor.

It is found in the cytoplasm. In terms of biological role, NAD-binding protein involved in the addition of a carboxymethylaminomethyl (cmnm) group at the wobble position (U34) of certain tRNAs, forming tRNA-cmnm(5)s(2)U34. The chain is tRNA uridine 5-carboxymethylaminomethyl modification enzyme MnmG from Streptococcus thermophilus (strain ATCC BAA-491 / LMD-9).